The sequence spans 238 residues: MIKVIFFDLDDTLVDTTKLAELARRNAIENMIRHGLPVDFETAYSELMELIKEYGSNFPHHFDYLLRRLDLPYNPKWVSAGVIAYHNTKFAYLREVPGARKVLIRLRELGYRLGIITDGNPVKQWEKILRLEIDDFFEHVIISDFEGVKKPHPKIFKKALKAFNVDAQEALMVGDRLYSDIYGAKNVGMKTVWFKYGKYSKEELEYREYADYEIEKLQDLLKVIENENGSNKEVHPAR.

Belongs to the HAD-like hydrolase superfamily. The cofactor is Mg(2+).

In terms of biological role, catalyzes the dephosphorylation of D,L-glyceraldehyde 3-phosphate in vitro. This chain is Glyceraldehyde 3-phosphate phosphatase, found in Pyrococcus abyssi (strain GE5 / Orsay).